The sequence spans 102 residues: Large ribosomal subunit protein uL24 (102 aa).

The protein belongs to the universal ribosomal protein uL24 family. In terms of assembly, part of the 50S ribosomal subunit.

Its function is as follows. One of two assembly initiator proteins, it binds directly to the 5'-end of the 23S rRNA, where it nucleates assembly of the 50S subunit. Functionally, one of the proteins that surrounds the polypeptide exit tunnel on the outside of the subunit. This chain is Large ribosomal subunit protein uL24, found in Alcanivorax borkumensis (strain ATCC 700651 / DSM 11573 / NCIMB 13689 / SK2).